The following is a 64-amino-acid chain: Small ribosomal subunit protein bS21 (64 aa).

Belongs to the bacterial ribosomal protein bS21 family.

This is Small ribosomal subunit protein bS21 from Anaeromyxobacter dehalogenans (strain 2CP-1 / ATCC BAA-258).